We begin with the raw amino-acid sequence, 154 residues long: Large ribosomal subunit protein uL13 (154 aa).

This sequence belongs to the universal ribosomal protein uL13 family. In terms of assembly, part of the 50S ribosomal subunit.

Its function is as follows. This protein is one of the early assembly proteins of the 50S ribosomal subunit, although it is not seen to bind rRNA by itself. It is important during the early stages of 50S assembly. This Rhizobium etli (strain CIAT 652) protein is Large ribosomal subunit protein uL13.